We begin with the raw amino-acid sequence, 124 residues long: Small ribosomal subunit protein uS12 (124 aa).

A 3-methylthioaspartic acid modification is found at D89.

Belongs to the universal ribosomal protein uS12 family. Part of the 30S ribosomal subunit. Contacts proteins S8 and S17. May interact with IF1 in the 30S initiation complex.

Functionally, with S4 and S5 plays an important role in translational accuracy. Its function is as follows. Interacts with and stabilizes bases of the 16S rRNA that are involved in tRNA selection in the A site and with the mRNA backbone. Located at the interface of the 30S and 50S subunits, it traverses the body of the 30S subunit contacting proteins on the other side and probably holding the rRNA structure together. The combined cluster of proteins S8, S12 and S17 appears to hold together the shoulder and platform of the 30S subunit. This chain is Small ribosomal subunit protein uS12, found in Shewanella denitrificans (strain OS217 / ATCC BAA-1090 / DSM 15013).